A 235-amino-acid chain; its full sequence is Aspartate/glutamate leucyltransferase (235 aa).

Belongs to the R-transferase family. Bpt subfamily.

The protein localises to the cytoplasm. The catalysed reaction is N-terminal L-glutamyl-[protein] + L-leucyl-tRNA(Leu) = N-terminal L-leucyl-L-glutamyl-[protein] + tRNA(Leu) + H(+). It catalyses the reaction N-terminal L-aspartyl-[protein] + L-leucyl-tRNA(Leu) = N-terminal L-leucyl-L-aspartyl-[protein] + tRNA(Leu) + H(+). In terms of biological role, functions in the N-end rule pathway of protein degradation where it conjugates Leu from its aminoacyl-tRNA to the N-termini of proteins containing an N-terminal aspartate or glutamate. This chain is Aspartate/glutamate leucyltransferase, found in Pseudomonas entomophila (strain L48).